The chain runs to 218 residues: Small ribosomal subunit protein uS3 (218 aa).

Residues 38–106 (IREFISKRLS…RVHINILEIK (69 aa)) form the KH type-2 domain.

It belongs to the universal ribosomal protein uS3 family. As to quaternary structure, part of the 30S ribosomal subunit. Forms a tight complex with proteins S10 and S14.

In terms of biological role, binds the lower part of the 30S subunit head. Binds mRNA in the 70S ribosome, positioning it for translation. In Bacillus velezensis (strain DSM 23117 / BGSC 10A6 / LMG 26770 / FZB42) (Bacillus amyloliquefaciens subsp. plantarum), this protein is Small ribosomal subunit protein uS3.